The chain runs to 319 residues: Formimidoylglutamase (319 aa).

Positions 127, 150, 152, 154, 242, and 244 each coordinate Mn(2+).

This sequence belongs to the arginase family. The cofactor is Mn(2+).

It catalyses the reaction N-formimidoyl-L-glutamate + H2O = formamide + L-glutamate. Its pathway is amino-acid degradation; L-histidine degradation into L-glutamate; L-glutamate from N-formimidoyl-L-glutamate (hydrolase route): step 1/1. In terms of biological role, catalyzes the conversion of N-formimidoyl-L-glutamate to L-glutamate and formamide. This chain is Formimidoylglutamase, found in Halalkalibacterium halodurans (strain ATCC BAA-125 / DSM 18197 / FERM 7344 / JCM 9153 / C-125) (Bacillus halodurans).